Consider the following 396-residue polypeptide: Tryptophan synthase beta chain (396 aa).

N6-(pyridoxal phosphate)lysine is present on Lys88.

This sequence belongs to the TrpB family. In terms of assembly, tetramer of two alpha and two beta chains. Requires pyridoxal 5'-phosphate as cofactor.

The enzyme catalyses (1S,2R)-1-C-(indol-3-yl)glycerol 3-phosphate + L-serine = D-glyceraldehyde 3-phosphate + L-tryptophan + H2O. Its pathway is amino-acid biosynthesis; L-tryptophan biosynthesis; L-tryptophan from chorismate: step 5/5. Functionally, the beta subunit is responsible for the synthesis of L-tryptophan from indole and L-serine. The polypeptide is Tryptophan synthase beta chain (Shewanella putrefaciens (strain CN-32 / ATCC BAA-453)).